Here is a 1058-residue protein sequence, read N- to C-terminus: Bromodomain-containing protein 1 (1058 aa).

Residues 1–12 show a composition bias toward basic residues; the sequence is MRRKGRCHRGSA. The tract at residues 1-25 is disordered; the sequence is MRRKGRCHRGSAARHPSSPCSIKHS. The interaction with KAT7/HBO1 and histones stretch occupies residues 31–80; that stretch reads LTYAQAQRMVEIEIEGRLHRISIFDPLEIILEDDLTAQEMSECNSNKENS. Position 128 is a phosphoserine (Ser128). Residues 214 to 264 form a PHD-type 1 zinc finger; that stretch reads DAVCCICMDGECQNSNVILFCDMCNLAVHQECYGVPYIPEGQWLCRHCLQS. The C2HC pre-PHD-type zinc finger occupies 268-301; that stretch reads PADCVLCPNKGGAFKKTDDDRWGHVVCALWIPEV. The PHD-type 2 zinc-finger motif lies at 325-389; it reads LTCYLCKQKG…RKTAYCDVHT (65 aa). Residues Lys368, Lys516, and Lys519 each carry the N6-acetyllysine modification. Glycyl lysine isopeptide (Lys-Gly) (interchain with G-Cter in SUMO2) cross-links involve residues Lys554 and Lys594. The region spanning 562–666 is the Bromo domain; it reads LRLTPLTVLL…DQGGVVLRQA (105 aa). Residues 754–763 are compositionally biased toward polar residues; the sequence is KLSQQHSQAP. 2 disordered regions span residues 754-776 and 791-847; these read KLSQ…EDEA and LETL…AAPR. Position 803 is a phosphoserine (Ser803). Position 903 is an N6-acetyllysine (Lys903). Positions 929–1012 constitute a PWWP domain; sequence PLKVVWAKCS…KSKMVPLGVD (84 aa). Residues Ser1052 and Ser1055 each carry the phosphoserine modification.

As to quaternary structure, component of some HBO1 complexes composed of KAT7/HBO1, MEAF6, ING4 and BRD1/BRPF2. Component of the MOZ/MORF complex composed at least of ING5, KAT6A, KAT6B, MEAF6 and one of BRPF1, BRD1/BRPF2 and BRPF3. Interacts (via PHD-type zinc finger domain) with unmodified histone H3. Interacts (via PWWP domain) with dimethylated and trimethylated 'Lys-79' on histone H3.

Its subcellular location is the nucleus. It localises to the chromosome. Its function is as follows. Scaffold subunit of various histone acetyltransferase (HAT) complexes, such as the MOZ/MORF and HBO1 complexes, that acts as a regulator of hematopoiesis. Plays a key role in HBO1 complex by directing KAT7/HBO1 specificity towards histone H3 'Lys-14' acetylation (H3K14ac), thereby promoting erythroid differentiation. The polypeptide is Bromodomain-containing protein 1 (Mus musculus (Mouse)).